Consider the following 178-residue polypeptide: Probable DNA-directed RNA polymerase subunit delta (178 aa).

The region spanning 14–81 (LSLIDVAHFI…GNNTWGLRAW (68 aa)) is the HTH HARE-type domain. Disordered regions lie at residues 88–122 (DEEV…DYDD) and 141–178 (LDED…PEDK). Composition is skewed to acidic residues over residues 105–122 (DDED…DYDD), 141–150 (LDEDEDDDDH), and 161–178 (TVED…PEDK).

This sequence belongs to the RpoE family. RNAP is composed of a core of 2 alpha, a beta and a beta' subunits. The core is associated with a delta subunit and one of several sigma factors.

Participates in both the initiation and recycling phases of transcription. In the presence of the delta subunit, RNAP displays an increased specificity of transcription, a decreased affinity for nucleic acids, and an increased efficiency of RNA synthesis because of enhanced recycling. This chain is Probable DNA-directed RNA polymerase subunit delta, found in Listeria monocytogenes serovar 1/2a (strain ATCC BAA-679 / EGD-e).